Reading from the N-terminus, the 614-residue chain is Glucosidase 2 subunit beta (614 aa).

An N-terminal signal peptide occupies residues 1 to 19 (MGLHAILLLLLLRISASAA). A glycan (N-linked (GlcNAc...) asparagine) is linked at asparagine 115. 3 stretches are compositionally biased toward basic and acidic residues: residues 194–222 (EEER…KKAS), 231–272 (QENH…HDPE), and 324–351 (TGEK…HSEE). The segment at 194-396 (EEERLRKEKE…SHESDDEYVD (203 aa)) is disordered. Residues 352–364 (THEDESDVPESAE) are compositionally biased toward acidic residues. Residues 372–382 (SEVEDDRHKYD) are compositionally biased toward basic and acidic residues. Over residues 383–396 (DEDFSHESDDEYVD) the composition is skewed to acidic residues. Residues 497–592 (DQCFESKEGK…VLSTPALCDE (96 aa)) form the MRH domain. 3 disulfide bridges follow: cysteine 499-cysteine 512, cysteine 549-cysteine 578, and cysteine 563-cysteine 590.

Heterodimer of a catalytic alpha subunit and a beta subunit.

It is found in the endoplasmic reticulum. It functions in the pathway glycan metabolism; N-glycan metabolism. Regulatory subunit of glucosidase II. May be required for defense response elicited by pathogen-associated molecular patterns (PAMPs). This is Glucosidase 2 subunit beta from Oryza sativa subsp. japonica (Rice).